Here is a 305-residue protein sequence, read N- to C-terminus: Ribonuclease BN (305 aa).

7 residues coordinate Zn(2+): His64, His66, Asp68, His69, His141, Asp212, and His270. The active-site Proton acceptor is the Asp68.

This sequence belongs to the RNase Z family. RNase BN subfamily. In terms of assembly, homodimer. Zn(2+) is required as a cofactor.

Zinc phosphodiesterase, which has both exoribonuclease and endoribonuclease activities. The polypeptide is Ribonuclease BN (Salmonella paratyphi C (strain RKS4594)).